The following is a 157-amino-acid chain: uncharacterized protein (157 aa).

A helical membrane pass occupies residues 42–64 (SCIRLIVMFICVAMITCPNSLRF).

The protein localises to the membrane. This is an uncharacterized protein from Saccharomyces cerevisiae (strain ATCC 204508 / S288c) (Baker's yeast).